A 382-amino-acid chain; its full sequence is Mannitol-1-phosphate 5-dehydrogenase (382 aa).

3–14 lines the NAD(+) pocket; it reads ALHFGAGNIGRG.

The protein belongs to the mannitol dehydrogenase family.

It catalyses the reaction D-mannitol 1-phosphate + NAD(+) = beta-D-fructose 6-phosphate + NADH + H(+). This chain is Mannitol-1-phosphate 5-dehydrogenase, found in Erwinia tasmaniensis (strain DSM 17950 / CFBP 7177 / CIP 109463 / NCPPB 4357 / Et1/99).